The sequence spans 319 residues: Ribonuclease Z (319 aa).

Zn(2+) contacts are provided by His-62, His-64, Asp-66, His-67, His-145, Asp-216, and His-274. Asp-66 (proton acceptor) is an active-site residue.

The protein belongs to the RNase Z family. In terms of assembly, homodimer. Zn(2+) serves as cofactor.

It catalyses the reaction Endonucleolytic cleavage of RNA, removing extra 3' nucleotides from tRNA precursor, generating 3' termini of tRNAs. A 3'-hydroxy group is left at the tRNA terminus and a 5'-phosphoryl group is left at the trailer molecule.. Functionally, zinc phosphodiesterase, which displays some tRNA 3'-processing endonuclease activity. Probably involved in tRNA maturation, by removing a 3'-trailer from precursor tRNA. The protein is Ribonuclease Z of Synechococcus sp. (strain CC9605).